The primary structure comprises 302 residues: Nucleotide-binding protein Bcep1808_2900 (302 aa).

An ATP-binding site is contributed by 8–15 (GISGSGKS). 57-60 (DARS) provides a ligand contact to GTP.

Belongs to the RapZ-like family.

Its function is as follows. Displays ATPase and GTPase activities. The chain is Nucleotide-binding protein Bcep1808_2900 from Burkholderia vietnamiensis (strain G4 / LMG 22486) (Burkholderia cepacia (strain R1808)).